The chain runs to 344 residues: Beta-1,4-galactosyltransferase 4 (344 aa).

Residues 1–12 lie on the Cytoplasmic side of the membrane; sequence MGFNLTFHLSYK. Residues 13–38 form a helical; Signal-anchor for type II membrane protein membrane-spanning segment; that stretch reads FRLLLLLTLCLTVVGWATSNYFVGAI. At 39-344 the chain is on the lumenal side; that stretch reads QEIPKAKEFM…NITVDFWFGA (306 aa). Residues Cys-77 and Cys-118 are joined by a disulfide bond. UDP-alpha-D-galactose contacts are provided by residues 129 to 133, 168 to 170, and 195 to 196; these read PHRNR, FNR, and VD. The cysteines at positions 189 and 208 are disulfide-linked. Asp-196 lines the Mn(2+) pocket. N-linked (GlcNAc...) asparagine glycosylation occurs at Asn-220. UDP-alpha-D-galactose is bound by residues Tyr-224 and Trp-256. 258–261 lines the N-acetyl-D-glucosamine pocket; that stretch reads GEDD. His-289 provides a ligand contact to Mn(2+). 289–291 contributes to the UDP-alpha-D-galactose binding site; it reads HTR. Arg-301 is a binding site for N-acetyl-D-glucosamine. Asn-335 is a glycosylation site (N-linked (GlcNAc...) asparagine).

This sequence belongs to the glycosyltransferase 7 family. Interacts with SLC35A2 (isoform 2; UGT1). Mn(2+) is required as a cofactor. In terms of processing, N-glycosylated. As to expression, highest expression is observed in placenta, pancreas, kidney and heart. Expressed in corneal epithelial cells.

The protein localises to the golgi apparatus membrane. It is found in the secreted. It catalyses the reaction N-acetyl-D-glucosamine + UDP-alpha-D-galactose = beta-D-galactosyl-(1-&gt;4)-N-acetyl-D-glucosamine + UDP + H(+). The catalysed reaction is a beta-D-GlcNAc-(1-&gt;3)-beta-D-Gal-(1-&gt;4)-beta-D-Glc-(1&lt;-&gt;1)-Cer(d18:1(4E)) + UDP-alpha-D-galactose = a neolactoside nLc4Cer(d18:1(4E)) + UDP + H(+). It carries out the reaction 3-O-{beta-D-galactosyl-(1-&gt;3)-[6-O-sulfo-N-acetyl-beta-D-glucosaminyl-(1-&gt;6)]-N-acetyl-alpha-D-galactosaminyl}-L-seryl-[protein] + UDP-alpha-D-galactose = 3-O-{beta-D-galactosyl-(1-&gt;3)-[beta-D-galactosyl-(1-&gt;4)-6-O-sulfo-N-acetyl-beta-D-glucosaminyl-(1-&gt;6)]-N-acetyl-alpha-D-galactosaminyl}-L-seryl-[protein] + UDP + H(+). The enzyme catalyses 3-O-{beta-D-galactosyl-(1-&gt;3)-[6-O-sulfo-N-acetyl-beta-D-glucosaminyl-(1-&gt;6)]-N-acetyl-alpha-D-galactosaminyl}-L-threonyl-[protein] + UDP-alpha-D-galactose = 3-O-{beta-D-galactosyl-(1-&gt;3)-[beta-D-galactosyl-(1-&gt;4)-6-O-sulfo-N-acetyl-beta-D-glucosaminyl-(1-&gt;6)]-N-acetyl-alpha-D-galactosaminyl}-L-threonyl-[protein] + UDP + H(+). Its pathway is protein modification; protein glycosylation. It functions in the pathway glycolipid biosynthesis. Up-regulated by LALBA. Galactose (Gal) transferase involved in the synthesis of terminal N-acetyllactosamine (LacNac) unit present on glycan chains of glycoproteins and glycosphingolipids. Catalyzes the transfer of Gal residue via a beta1-&gt;4 linkage from UDP-Gal to the non-reducing terminal N-acetyl glucosamine 6-O-sulfate (6-O-sulfoGlcNAc) in the linearly growing chain of both N- and O-linked keratan sulfate proteoglycans. Cooperates with B3GNT7 N-acetyl glucosamine transferase and CHST6 and CHST1 sulfotransferases to construct and elongate mono- and disulfated disaccharide units [-&gt;3Galbeta1-&gt;4(6-sulfoGlcNAcbeta)1-&gt;] and [-&gt;3(6-sulfoGalbeta)1-&gt;4(6-sulfoGlcNAcbeta)1-&gt;] within keratan sulfate polymer. Transfers Gal residue via a beta1-&gt;4 linkage to terminal 6-O-sulfoGlcNAc within the LacNac unit of core 2 O-glycans forming 6-sulfo-sialyl-Lewis X (sLex). May contribute to the generation of sLex epitope on mucin-type glycoproteins that serve as ligands for SELL/L-selectin, a major regulator of leukocyte migration. In the biosynthesis pathway of neolacto-series glycosphingolipids, transfers Gal residue via a beta1-&gt;4 linkage to terminal GlcNAc of a lactotriaosylceramide (Lc3Cer) acceptor to form a neolactotetraosylceramide. The sequence is that of Beta-1,4-galactosyltransferase 4 from Homo sapiens (Human).